Here is a 217-residue protein sequence, read N- to C-terminus: Cytidylate kinase (217 aa).

Residue Gly-10–Thr-18 coordinates ATP.

Belongs to the cytidylate kinase family. Type 1 subfamily.

It localises to the cytoplasm. The enzyme catalyses CMP + ATP = CDP + ADP. The catalysed reaction is dCMP + ATP = dCDP + ADP. The chain is Cytidylate kinase from Clostridium botulinum (strain Okra / Type B1).